A 236-amino-acid chain; its full sequence is Small ribosomal subunit protein uS2c (236 aa).

The protein belongs to the universal ribosomal protein uS2 family.

The protein localises to the plastid. Its subcellular location is the chloroplast. This is Small ribosomal subunit protein uS2c (rps2) from Oryza sativa (Rice).